The chain runs to 251 residues: Sugar fermentation stimulation protein homolog (251 aa).

This sequence belongs to the SfsA family.

The sequence is that of Sugar fermentation stimulation protein homolog from Yersinia pseudotuberculosis serotype O:1b (strain IP 31758).